The following is a 185-amino-acid chain: ADP-ribosylation factor (185 aa).

G2 carries N-myristoyl glycine lipidation. GTP-binding positions include 27 to 34, 70 to 74, and 129 to 132; these read GLDAAGKT, DVGGQ, and NKQD.

The protein belongs to the small GTPase superfamily. Arf family.

It localises to the golgi apparatus. Its function is as follows. GTP-binding protein involved in protein trafficking; may modulate vesicle budding and uncoating within the Golgi apparatus. This chain is ADP-ribosylation factor, found in Neurospora crassa (strain ATCC 24698 / 74-OR23-1A / CBS 708.71 / DSM 1257 / FGSC 987).